The sequence spans 824 residues: ABC transporter B family member 7 (824 aa).

Residues arginine 41–asparagine 101 are disordered. A compositionally biased stretch (low complexity) spans asparagine 63–asparagine 101. 6 helical membrane passes run isoleucine 164–leucine 184, tryptophan 252–threonine 272, leucine 325–leucine 345, tryptophan 347–phenylalanine 367, alanine 431–phenylalanine 451, and isoleucine 461–isoleucine 481. Residues phenylalanine 167–lysine 489 enclose the ABC transmembrane type-1 domain. The ABC transporter domain occupies isoleucine 521–leucine 767. Glycine 570–glutamate 576 lines the ATP pocket. The tract at residues asparagine 772–asparagine 813 is disordered.

Belongs to the ABC transporter superfamily. ABCB family.

It localises to the membrane. This Dictyostelium discoideum (Social amoeba) protein is ABC transporter B family member 7 (abcB7).